We begin with the raw amino-acid sequence, 297 residues long: N-acetylneuraminate lyase (297 aa).

Residues Ser47 and Thr48 each contribute to the aceneuramate site. Tyr137 (proton donor) is an active-site residue. The Schiff-base intermediate with substrate role is filled by Lys165. Aceneuramate-binding residues include Thr167, Gly189, Asp191, Glu192, and Ser208.

It belongs to the DapA family. NanA subfamily. Homotetramer.

Its subcellular location is the cytoplasm. The enzyme catalyses aceneuramate = aldehydo-N-acetyl-D-mannosamine + pyruvate. The protein operates within amino-sugar metabolism; N-acetylneuraminate degradation; D-fructose 6-phosphate from N-acetylneuraminate: step 1/5. Functionally, catalyzes the reversible aldol cleavage of N-acetylneuraminic acid (sialic acid; Neu5Ac) to form pyruvate and N-acetylmannosamine (ManNAc) via a Schiff base intermediate. This chain is N-acetylneuraminate lyase, found in Escherichia coli (strain SE11).